A 190-amino-acid polypeptide reads, in one-letter code: GTP cyclohydrolase 1 (190 aa).

Residues C75, H78, and C146 each contribute to the Zn(2+) site.

This sequence belongs to the GTP cyclohydrolase I family. As to quaternary structure, homomer.

The enzyme catalyses GTP + H2O = 7,8-dihydroneopterin 3'-triphosphate + formate + H(+). It functions in the pathway cofactor biosynthesis; 7,8-dihydroneopterin triphosphate biosynthesis; 7,8-dihydroneopterin triphosphate from GTP: step 1/1. This is GTP cyclohydrolase 1 from Campylobacter concisus (strain 13826).